We begin with the raw amino-acid sequence, 35 residues long: Potassium channel toxin alpha-KTx 6.12 (35 aa).

A Pyrrolidone carboxylic acid modification is found at Q1. Cystine bridges form between C4–C24, C10–C29, C14–C31, and C19–C34. K35 is modified (lysine amide).

The protein belongs to the short scorpion toxin superfamily. Potassium channel inhibitor family. Alpha-KTx 06 subfamily. Monomer. In terms of tissue distribution, expressed by the venom gland.

It is found in the secreted. High affinity blocker of Kv1.3/KCNA3 channels of human T cells. Blocks Kv1.2/KCNA2 with an order of magnitude smaller than for Kv1.3/KCNA3. The polypeptide is Potassium channel toxin alpha-KTx 6.12 (Anuroctonus phaiodactylus (Mafia scorpion)).